The sequence spans 255 residues: Hydroxyacylglutathione hydrolase (255 aa).

Positions 56, 58, 60, 61, 114, 133, and 171 each coordinate Zn(2+).

The protein belongs to the metallo-beta-lactamase superfamily. Glyoxalase II family. As to quaternary structure, monomer. Requires Zn(2+) as cofactor.

It catalyses the reaction an S-(2-hydroxyacyl)glutathione + H2O = a 2-hydroxy carboxylate + glutathione + H(+). It functions in the pathway secondary metabolite metabolism; methylglyoxal degradation; (R)-lactate from methylglyoxal: step 2/2. Functionally, thiolesterase that catalyzes the hydrolysis of S-D-lactoyl-glutathione to form glutathione and D-lactic acid. This is Hydroxyacylglutathione hydrolase from Bradyrhizobium sp. (strain BTAi1 / ATCC BAA-1182).